Reading from the N-terminus, the 153-residue chain is Mediator of RNA polymerase II transcription subunit 22 (153 aa).

This sequence belongs to the Mediator complex subunit 22 family. As to quaternary structure, component of the Mediator complex.

It localises to the nucleus. Its function is as follows. Component of the Mediator complex, a coactivator involved in the regulated transcription of nearly all RNA polymerase II-dependent genes. Mediator functions as a bridge to convey information from gene-specific regulatory proteins to the basal RNA polymerase II transcription machinery. Mediator is recruited to promoters by direct interactions with regulatory proteins and serves as a scaffold for the assembly of a functional preinitiation complex with RNA polymerase II and the general transcription factors. The chain is Mediator of RNA polymerase II transcription subunit 22 (mdt-22) from Caenorhabditis briggsae.